Here is a 489-residue protein sequence, read N- to C-terminus: Rhamnulokinase (489 aa).

13-17 (ASSGR) provides a ligand contact to ATP. A disulfide bridge connects residues Cys-68 and Cys-222. Substrate-binding positions include Gly-83 and 236–238 (HDT). The Proton acceptor role is filled by Asp-237. ATP is bound at residue Thr-259. Asn-296 contacts substrate. An ATP-binding site is contributed by Gln-304. Cys-353 and Cys-370 are joined by a disulfide. An ATP-binding site is contributed by Gly-402. The cysteines at positions 413 and 417 are disulfide-linked.

Belongs to the rhamnulokinase family. It depends on Mg(2+) as a cofactor.

It catalyses the reaction L-rhamnulose + ATP = L-rhamnulose 1-phosphate + ADP + H(+). Its pathway is carbohydrate degradation; L-rhamnose degradation; glycerone phosphate from L-rhamnose: step 2/3. Its function is as follows. Involved in the catabolism of L-rhamnose (6-deoxy-L-mannose). Catalyzes the transfer of the gamma-phosphate group from ATP to the 1-hydroxyl group of L-rhamnulose to yield L-rhamnulose 1-phosphate. In Salmonella enteritidis PT4 (strain P125109), this protein is Rhamnulokinase.